The following is a 299-amino-acid chain: Protease HtpX homolog (299 aa).

Helical transmembrane passes span 15–35 and 39–59; these read ILLL…GYLF and GLGG…SMIF. H143 is a Zn(2+) binding site. E144 is an active-site residue. Residue H147 participates in Zn(2+) binding. 2 helical membrane-spanning segments follow: residues 158–178 and 198–218; these read IAVA…RMMW and IIML…ATLV. E227 serves as a coordination point for Zn(2+).

It belongs to the peptidase M48B family. The cofactor is Zn(2+).

It localises to the cell membrane. This is Protease HtpX homolog from Streptococcus pneumoniae serotype 19F (strain G54).